The following is a 259-amino-acid chain: Small ribosomal subunit protein uS2 (259 aa).

A disordered region spans residues 234 to 259 (VAEDSEEVSTVDADAITAEDFETEEV). Residues 250-259 (TAEDFETEEV) show a composition bias toward acidic residues.

The protein belongs to the universal ribosomal protein uS2 family.

The polypeptide is Small ribosomal subunit protein uS2 (Sulfurimonas denitrificans (strain ATCC 33889 / DSM 1251) (Thiomicrospira denitrificans (strain ATCC 33889 / DSM 1251))).